A 705-amino-acid chain; its full sequence is GATOR2 complex protein WDR24 (705 aa).

6 WD repeats span residues 1 to 28 (MDEN…RNKQ), 34 to 74 (EHKR…SVST), 77 to 117 (GQSE…RYER), 121 to 161 (AHNG…AKEI), 165 to 207 (QTIA…IPSA), and 211 to 254 (EHKD…IDRA). A C4-type zinc finger spans residues 633 to 655 (NCSNCKRPMSNRGWICDRCRQCA). Positions 634, 637, 648, 651, 658, 661, 672, 675, 677, 680, 683, 694, 698, 700, and 702 each coordinate Zn(2+). An RING-type; atypical zinc finger spans residues 656-705 (SMCAVCHHVVKGLFVWCQGCSHGGHLQHIMKWLETSSHCPAGCGHLCEYT).

It belongs to the WD repeat WDR24 family. As to quaternary structure, component of the GATOR2 subcomplex, composed of MIOS, SEC13, SEH1L, WDR24 and WDR59. The GATOR2 complex interacts with CASTOR1 and CASTOR2; the interaction is negatively regulated by arginine. The GATOR2 complex interacts with SESN1, SESN2 and SESN3; the interaction is negatively regulated by amino acids.

It localises to the lysosome membrane. The catalysed reaction is S-ubiquitinyl-[E2 ubiquitin-conjugating enzyme]-L-cysteine + [acceptor protein]-L-lysine = [E2 ubiquitin-conjugating enzyme]-L-cysteine + N(6)-ubiquitinyl-[acceptor protein]-L-lysine.. It functions in the pathway protein modification; protein ubiquitination. The GATOR2 complex is negatively regulated by the upstream amino acid sensors CASTOR1 and SESN2, which sequester the GATOR2 complex in absence of amino acids. In the presence of abundant amino acids, GATOR2 is released from CASTOR1 and SESN2 and activated. Its function is as follows. Catalytic component of the GATOR2 complex, a multiprotein complex that acts as an activator of the amino acid-sensing branch of the mTORC1 signaling pathway. The GATOR2 complex indirectly activates mTORC1 through the inhibition of the GATOR1 subcomplex. GATOR2 probably acts as an E3 ubiquitin-protein ligase toward GATOR1. In the presence of abundant amino acids, the GATOR2 complex mediates ubiquitination of the NPRL2 core component of the GATOR1 complex, leading to GATOR1 inactivation. In the absence of amino acids, GATOR2 is inhibited, activating the GATOR1 complex. In addition to its role in regulation of the mTORC1 complex, promotes the acidification of lysosomes and facilitates autophagic flux. Within the GATOR2 complex, WDR24 constitutes the catalytic subunit that mediates 'Lys-6'-linked ubiquitination of NPRL2. This is GATOR2 complex protein WDR24 from Gallus gallus (Chicken).